Here is a 417-residue protein sequence, read N- to C-terminus: Exodeoxyribonuclease 7 large subunit (417 aa).

Belongs to the XseA family. In terms of assembly, heterooligomer composed of large and small subunits.

The protein localises to the cytoplasm. It catalyses the reaction Exonucleolytic cleavage in either 5'- to 3'- or 3'- to 5'-direction to yield nucleoside 5'-phosphates.. Its function is as follows. Bidirectionally degrades single-stranded DNA into large acid-insoluble oligonucleotides, which are then degraded further into small acid-soluble oligonucleotides. This chain is Exodeoxyribonuclease 7 large subunit, found in Lactococcus lactis subsp. lactis (strain IL1403) (Streptococcus lactis).